Here is a 423-residue protein sequence, read N- to C-terminus: Glutamate-1-semialdehyde 2,1-aminomutase (423 aa).

Lysine 263 is modified (N6-(pyridoxal phosphate)lysine).

It belongs to the class-III pyridoxal-phosphate-dependent aminotransferase family. HemL subfamily. It depends on pyridoxal 5'-phosphate as a cofactor.

It is found in the cytoplasm. The catalysed reaction is (S)-4-amino-5-oxopentanoate = 5-aminolevulinate. The protein operates within porphyrin-containing compound metabolism; protoporphyrin-IX biosynthesis; 5-aminolevulinate from L-glutamyl-tRNA(Glu): step 2/2. In Ignicoccus hospitalis (strain KIN4/I / DSM 18386 / JCM 14125), this protein is Glutamate-1-semialdehyde 2,1-aminomutase.